We begin with the raw amino-acid sequence, 334 residues long: MIEADRIISASPQREEEVVDRAIRPKLLTDYVGQPSVREQMEIFIKAAKLRHEALDHLLIFGPPGLGKTTLANIVANEMGVNIRTTSGPVLEKAGDLAAMLTNLEPYDILFIDEIHRLSPAIEEVLYPAMEDYQLDIMIGEGPAARSIKLDLPPFTLVGATTRAGSLTSPLRDRFGIVQRLEFYNVDDLTSIVKRSAACLNLNLSADGAYEVARRSRGTPRIANRLLRRVRDYADVRNNGVITSEIAKQALVMLDVDPQGFDFMDIKLLQAIVERFDGGPVGLDNLAAAIGEERETIEDVLEPYLIQQGFLQRTPRGRIATTRTYAHLGISLSE.

The tract at residues 4 to 184 (ADRIISASPQ…FGIVQRLEFY (181 aa)) is large ATPase domain (RuvB-L). ATP contacts are provided by residues isoleucine 23, arginine 24, glycine 65, lysine 68, threonine 69, threonine 70, 131-133 (EDY), arginine 174, tyrosine 184, and arginine 221. Residue threonine 69 participates in Mg(2+) binding. The segment at 185 to 255 (NVDDLTSIVK…IAKQALVMLD (71 aa)) is small ATPAse domain (RuvB-S). The head domain (RuvB-H) stretch occupies residues 258 to 334 (PQGFDFMDIK…YAHLGISLSE (77 aa)). 3 residues coordinate DNA: arginine 294, arginine 313, and arginine 318.

The protein belongs to the RuvB family. As to quaternary structure, homohexamer. Forms an RuvA(8)-RuvB(12)-Holliday junction (HJ) complex. HJ DNA is sandwiched between 2 RuvA tetramers; dsDNA enters through RuvA and exits via RuvB. An RuvB hexamer assembles on each DNA strand where it exits the tetramer. Each RuvB hexamer is contacted by two RuvA subunits (via domain III) on 2 adjacent RuvB subunits; this complex drives branch migration. In the full resolvosome a probable DNA-RuvA(4)-RuvB(12)-RuvC(2) complex forms which resolves the HJ.

It is found in the cytoplasm. The enzyme catalyses ATP + H2O = ADP + phosphate + H(+). Its function is as follows. The RuvA-RuvB-RuvC complex processes Holliday junction (HJ) DNA during genetic recombination and DNA repair, while the RuvA-RuvB complex plays an important role in the rescue of blocked DNA replication forks via replication fork reversal (RFR). RuvA specifically binds to HJ cruciform DNA, conferring on it an open structure. The RuvB hexamer acts as an ATP-dependent pump, pulling dsDNA into and through the RuvAB complex. RuvB forms 2 homohexamers on either side of HJ DNA bound by 1 or 2 RuvA tetramers; 4 subunits per hexamer contact DNA at a time. Coordinated motions by a converter formed by DNA-disengaged RuvB subunits stimulates ATP hydrolysis and nucleotide exchange. Immobilization of the converter enables RuvB to convert the ATP-contained energy into a lever motion, pulling 2 nucleotides of DNA out of the RuvA tetramer per ATP hydrolyzed, thus driving DNA branch migration. The RuvB motors rotate together with the DNA substrate, which together with the progressing nucleotide cycle form the mechanistic basis for DNA recombination by continuous HJ branch migration. Branch migration allows RuvC to scan DNA until it finds its consensus sequence, where it cleaves and resolves cruciform DNA. The chain is Holliday junction branch migration complex subunit RuvB from Haemophilus ducreyi (strain 35000HP / ATCC 700724).